The chain runs to 88 residues: Small ribosomal subunit protein bS20 (88 aa).

This sequence belongs to the bacterial ribosomal protein bS20 family.

In terms of biological role, binds directly to 16S ribosomal RNA. The sequence is that of Small ribosomal subunit protein bS20 from Clostridium kluyveri (strain NBRC 12016).